Consider the following 501-residue polypeptide: Dihydrolipoyl dehydrogenase, mitochondrial (501 aa).

Residues M1 to F31 constitute a mitochondrion transit peptide. Residues E67–C76, K85, G149, and T178–S180 each bind FAD. C76 and C81 form a disulfide bridge. NAD(+) contacts are provided by residues G215–E222, E238, V272, and G307. FAD contacts are provided by residues D348 and M354 to H357. The Proton acceptor role is filled by H480.

The protein belongs to the class-I pyridine nucleotide-disulfide oxidoreductase family. Homodimer. FAD serves as cofactor.

The protein resides in the mitochondrion matrix. The enzyme catalyses N(6)-[(R)-dihydrolipoyl]-L-lysyl-[protein] + NAD(+) = N(6)-[(R)-lipoyl]-L-lysyl-[protein] + NADH + H(+). Its function is as follows. Lipoamide dehydrogenase is a component of the glycine cleavage system as well as of the alpha-ketoacid dehydrogenase complexes. The pyruvate dehydrogenase complex contains multiple copies of three enzymatic components: pyruvate dehydrogenase (E1), dihydrolipoamide acetyltransferase (E2) and lipoamide dehydrogenase (E3). The polypeptide is Dihydrolipoyl dehydrogenase, mitochondrial (LPD) (Pisum sativum (Garden pea)).